The sequence spans 130 residues: Small ribosomal subunit protein uS9 (130 aa).

The protein belongs to the universal ribosomal protein uS9 family.

The polypeptide is Small ribosomal subunit protein uS9 (Aliivibrio salmonicida (strain LFI1238) (Vibrio salmonicida (strain LFI1238))).